Consider the following 338-residue polypeptide: Cinnamoyl-CoA reductase 1 (338 aa).

NADP(+)-binding positions include 22-28 (GAGGFIG), Arg-47, Lys-53, 73-74 (DV), 93-95 (VAS), Tyr-165, Lys-169, 192-195 (PSMT), and Ser-207. An intrachain disulfide couples Cys-158 to Cys-166. Lys-169 functions as the Proton donor in the catalytic mechanism.

The protein belongs to the NAD(P)-dependent epimerase/dehydratase family. Dihydroflavonol-4-reductase subfamily. Interacts with RAC1 in a GTP-dependent manner.

It is found in the cytoplasm. The catalysed reaction is (E)-cinnamaldehyde + NADP(+) + CoA = (E)-cinnamoyl-CoA + NADPH + H(+). It functions in the pathway aromatic compound metabolism; phenylpropanoid biosynthesis. With respect to regulation, activated by the small GTPase RAC1. In terms of biological role, involved in the latter stages of lignin biosynthesis. Catalyzes one of the last steps of monolignol biosynthesis, the conversion of cinnamoyl-CoAs into their corresponding cinnamaldehydes. Probably involved in the formation of lignin in defense responses. This is Cinnamoyl-CoA reductase 1 from Oryza sativa subsp. japonica (Rice).